A 183-amino-acid chain; its full sequence is Tumor necrosis factor ligand superfamily member 4 (183 aa).

Over 1-23 the chain is Cytoplasmic; sequence MERVQPLEENVGNAARPRFERNK. A helical; Signal-anchor for type II membrane protein transmembrane segment spans residues 24 to 50; the sequence is LLLVASVIQGLGLLLCFTYICLHFSAL. Positions 51 to 173 constitute a THD domain; the sequence is QVSHRYPRIQ…HVNGGELILI (123 aa). Residues 51–183 lie on the Extracellular side of the membrane; the sequence is QVSHRYPRIQ…HQNPGEFCVL (133 aa). N-linked (GlcNAc...) asparagine glycosylation is found at Asn90, Asn114, Asn152, and Asn157. A disulfide bridge links Cys97 with Cys181.

Belongs to the tumor necrosis factor family. Homotrimer.

Its subcellular location is the membrane. Its function is as follows. Cytokine that binds to TNFRSF4. Co-stimulates T-cell proliferation and cytokine production. The polypeptide is Tumor necrosis factor ligand superfamily member 4 (TNFSF4) (Homo sapiens (Human)).